The sequence spans 417 residues: Serine/threonine-protein phosphatase 4 regulatory subunit 2 (417 aa).

Polar residues-rich tracts occupy residues 140–149 (EKNNSNSLNR), 158–170 (NSPSYTERSNING), and 186–196 (APMTTNGLPES). Residues 140-417 (EKNNSNSLNR…EVTDEPMEQD (278 aa)) form a disordered region. Residue Ser159 is modified to Phosphoserine. Over residues 197–213 (TDSKEANLQQNEEKNHS) the composition is skewed to basic and acidic residues. Low complexity predominate over residues 214–226 (DSSTSESEVSSVS). At Ser226 the chain carries Phosphoserine. Positions 231-258 (KHPDEDAVEAEGHEVKRLRFDKEGEVRE) are enriched in basic and acidic residues. Polar residues predominate over residues 259–269 (TASQTTSSEIS). Over residues 283–297 (QDKDKDSRCTRQHCT) the composition is skewed to basic and acidic residues. Positions 298–311 (EEDEEEDEEEEEES) are enriched in acidic residues. The span at 318–327 (MIPERKNQEK) shows a compositional bias: basic and acidic residues. Over residues 338–350 (ETSEENNQMEESD) the composition is skewed to acidic residues. A compositionally biased stretch (basic and acidic residues) spans 353 to 363 (QAEKDLLHSEG). A compositionally biased stretch (low complexity) spans 366 to 375 (NEGPVSSSSS). Residues 385 to 399 (GSNSSKTGEILSESS) are compositionally biased toward polar residues. Over residues 400–417 (MENDDEATEVTDEPMEQD) the composition is skewed to acidic residues.

Belongs to the PPP4R2 family. Serine/threonine-protein phosphatase 4 (PP4) occurs in different assemblies of the catalytic and one or more regulatory subunits. Component of the PP4 complexes PPP4C-PPP4R2, PPP4C-PPP4R2-PPP4R3A and PPP4C-PPP4R2-PPP4R3B. The PPP4C-PPP4R2 complex appears to be a tetramer composed of 2 molecules of PPP4C and 2 molecules of PPP4R2. Interacts with DDX20/GEMIN3 and GEMIN4. Interacts with RPA2; this DNA damage-dependent interaction recruits PPP4C leading to RPA2 dephosphorylation. In terms of tissue distribution, widely expressed.

It localises to the cytoplasm. Its subcellular location is the cytoskeleton. The protein resides in the microtubule organizing center. It is found in the centrosome. The protein localises to the nucleus. Regulatory subunit of serine/threonine-protein phosphatase 4 (PP4). May regulate the activity of PPP4C at centrosomal microtubule organizing centers. Its interaction with the SMN complex leads to enhance the temporal localization of snRNPs, suggesting a role of PPP4C in maturation of spliceosomal snRNPs. The PPP4C-PPP4R2-PPP4R3A PP4 complex specifically dephosphorylates H2AX phosphorylated on 'Ser-140' (gamma-H2AX) generated during DNA replication and required for DNA double strand break repair. Mediates RPA2 dephosphorylation by recruiting PPP4C to RPA2 in a DNA damage-dependent manner. RPA2 dephosphorylation is required for the efficient RPA2-mediated recruitment of RAD51 to chromatin following double strand breaks, an essential step for DNA repair. This chain is Serine/threonine-protein phosphatase 4 regulatory subunit 2 (PPP4R2), found in Homo sapiens (Human).